Consider the following 1061-residue polypeptide: Ribonuclease E (1061 aa).

In terms of domain architecture, S1 motif spans 39–119 (ANIYKGKITR…GNKGAALTTF (81 aa)). Positions 57 to 112 (FVDYGAERHGFLPLKEIAREYFPANYSAHGRPNIKDVLREGQEVIVQIDKEERGNK) are interaction with RNA. Residues 169–170 (RT) are interaction with RNA 5'-terminal monophosphate. Positions 303 and 346 each coordinate Mg(2+). 2 residues coordinate Zn(2+): Cys404 and Cys407. The tract at residues 404 to 407 (CPRC) is required for zinc-mediated homotetramerization and catalytic activity. Disordered stretches follow at residues 532 to 565 (FAMP…PAAP), 586 to 731 (EETK…KVRY), and 752 to 822 (EPIV…RYPT). Pro residues predominate over residues 536-546 (DVPPAPTPAEP). Over residues 547-565 (AAPVVAPAPKAAPATPAAP) the composition is skewed to low complexity. Composition is skewed to basic and acidic residues over residues 598 to 608 (AEAKPERQQDR), 615 to 640 (NRRD…EENR), and 652 to 690 (ETRE…KRQA). Residues 796 to 814 (RRSRRSPRHLRVSGQRRRR) show a composition bias toward basic residues. The interaction with enolase stretch occupies residues 833 to 850 (ASPELASGKVWIRYPIVR). The interaction with PNPase stretch occupies residues 1021–1061 (EAPRHSDWQRPTFAFEGKGAAGGHTATHHASAAPARPQPVE). The disordered stretch occupies residues 1031–1061 (PTFAFEGKGAAGGHTATHHASAAPARPQPVE). A compositionally biased stretch (low complexity) spans 1043-1055 (GHTATHHASAAPA).

It belongs to the RNase E/G family. RNase E subfamily. As to quaternary structure, component of the RNA degradosome, which is a multiprotein complex involved in RNA processing and mRNA degradation. Within the RNA degradosome, RNase E assembles into a homotetramer formed by a dimer of dimers. Tetramerization is essential for catalytic activity, but not for RNA-binding. Interacts with RhlB, PNPase (pnp) and enolase (eno). Interacts with DeaD at reduced temperature. Requires Zn(2+) as cofactor. The cofactor is Mg(2+).

It is found in the cytoplasm. The protein localises to the cell inner membrane. It catalyses the reaction Endonucleolytic cleavage of single-stranded RNA in A- and U-rich regions.. Its activity is regulated as follows. The presence of a 5'-monophosphate on substrate RNA accelerates its cleavage by catalytically activating the enzyme. Binding to the membrane stabilizes protein structure and increases affinity for the substrate. Endoribonuclease that plays a central role in RNA processing and decay. Required for the maturation of 5S and 16S rRNAs and the majority of tRNAs. Also involved in the degradation of most mRNAs. Can also process other RNA species, such as RNAI, a molecule that controls the replication of ColE1 plasmid, and the cell division inhibitor DicF-RNA. It initiates the decay of RNAs by cutting them internally near their 5'-end. It is able to remove poly(A) tails by an endonucleolytic process. Required to initiate rRNA degradation during both starvation and quality control; acts after RNase PH (rph) exonucleolytically digests the 3'-end of the 16S rRNA. Degradation of 16S rRNA leads to 23S rRNA degradation. Processes the 3 tRNA(Pro) precursors immediately after the 3'-CCA to generate the mature ends. In terms of biological role, prefers 5'-monophosphorylated substrates over 5'-triphosphorylated substrates. 5'-monophosphate-assisted cleavage requires at least 2 and preferably 3 or more unpaired 5'-terminal nucleotides. The optimal spacing between the 5' end and the scissile phosphate appears to be 8 nucleotides. Any sequence of unpaired nucleotides at the 5'-end is tolerated. This is Ribonuclease E from Escherichia coli (strain K12).